The chain runs to 118 residues: Large ribosomal subunit protein uL18 (118 aa).

It belongs to the universal ribosomal protein uL18 family. In terms of assembly, part of the 50S ribosomal subunit; part of the 5S rRNA/L5/L18/L25 subcomplex. Contacts the 5S and 23S rRNAs.

This is one of the proteins that bind and probably mediate the attachment of the 5S RNA into the large ribosomal subunit, where it forms part of the central protuberance. The sequence is that of Large ribosomal subunit protein uL18 from Campylobacter jejuni subsp. doylei (strain ATCC BAA-1458 / RM4099 / 269.97).